Here is a 139-residue protein sequence, read N- to C-terminus: Histone H2B (139 aa).

Basic and acidic residues predominate over residues 1-10; sequence MAPKAAEKKP. Residues 1 to 47 form a disordered region; it reads MAPKAAEKKPSTGGKAPAGGKAPAEKKEAGKKTAASGEKKKRTKARK. N6-acetyllysine; alternate occurs at positions 8 and 9. Residues K8 and K9 each participate in a glycyl lysine isopeptide (Lys-Gly) (interchain with G-Cter in SUMO); alternate cross-link. A compositionally biased stretch (low complexity) spans 11–22; it reads STGGKAPAGGKA. K15 is subject to N6-acetyllysine. N6-acetyllysine; alternate is present on K26. K26 participates in a covalent cross-link: Glycyl lysine isopeptide (Lys-Gly) (interchain with G-Cter in SUMO); alternate. K27 is covalently cross-linked (Glycyl lysine isopeptide (Lys-Gly) (interchain with G-Cter in SUMO)). A Glycyl lysine isopeptide (Lys-Gly) (interchain with G-Cter in ubiquitin) cross-link involves residue K133.

The protein belongs to the histone H2B family. In terms of assembly, the nucleosome is a histone octamer containing two molecules each of H2A, H2B, H3 and H4 assembled in one H3-H4 heterotetramer and two H2A-H2B heterodimers. The octamer wraps approximately 147 bp of DNA. Monoubiquitinated by the UBC2-BRE1 complex to form H2BK123ub1. H2BK123ub1 gives a specific tag for epigenetic transcriptional activation and is also prerequisite for H3K4me and H3K79me formation. H2BK123ub1 also modulates the formation of double-strand breaks during meiosis and is a prerequisite for DNA-damage checkpoint activation. In terms of processing, acetylated by GCN5 to form H2BK11ac and H2BK16ac. H2BK16ac can also be formed by ESA1. Acetylation of N-terminal lysines and particularly formation of H2BK11acK16ac has a positive effect on transcription. Post-translationally, sumoylation to form H2BK6su or H2BK7su, and probably also H2BK16su or H2BK17su, occurs preferentially near the telomeres and represses gene transcription.

It localises to the nucleus. It is found in the chromosome. Its function is as follows. Core component of nucleosome. Nucleosomes wrap and compact DNA into chromatin, limiting DNA accessibility to the cellular machineries which require DNA as a template. Histones thereby play a central role in transcription regulation, DNA repair, DNA replication and chromosomal stability. DNA accessibility is regulated via a complex set of post-translational modifications of histones, also called histone code, and nucleosome remodeling. This is Histone H2B (HTB1) from Coccidioides immitis (strain RS) (Valley fever fungus).